Consider the following 599-residue polypeptide: Elongation factor 4 (599 aa).

Residues 2 to 184 form the tr-type G domain; that stretch reads KNIRNFSIIA…RLVRDIPPPE (183 aa). Residues 14 to 19 and 131 to 134 contribute to the GTP site; these read DHGKST and NKID.

The protein belongs to the TRAFAC class translation factor GTPase superfamily. Classic translation factor GTPase family. LepA subfamily.

Its subcellular location is the cell inner membrane. The enzyme catalyses GTP + H2O = GDP + phosphate + H(+). Required for accurate and efficient protein synthesis under certain stress conditions. May act as a fidelity factor of the translation reaction, by catalyzing a one-codon backward translocation of tRNAs on improperly translocated ribosomes. Back-translocation proceeds from a post-translocation (POST) complex to a pre-translocation (PRE) complex, thus giving elongation factor G a second chance to translocate the tRNAs correctly. Binds to ribosomes in a GTP-dependent manner. In Shigella sonnei (strain Ss046), this protein is Elongation factor 4.